We begin with the raw amino-acid sequence, 1021 residues long: Chondroitin sulfate ABC endolyase (1021 aa).

An N-terminal signal peptide occupies residues 1–24; that stretch reads MPIFRFTALAMTLGLLSAPYNAMA. Residues His43, Met70, Gln73, and Asp211 each contribute to the Na(+) site. The active-site Proton acceptor is the His501. Tyr508 acts as the Proton donor in catalysis.

The protein belongs to the polysaccharide lyase 8 family. Monomer.

Its subcellular location is the periplasm. It catalyses the reaction Endolytic cleavage of (1-&gt;4)-beta-galactosaminic bonds between N-acetylgalactosamine and either D-glucuronic acid or L-iduronic acid to produce a mixture of Delta(4)-unsaturated oligosaccharides of different sizes that are ultimately degraded to Delta(4)-unsaturated tetra- and disaccharides.. With respect to regulation, is inhibited by Zn(2+), Ni(2+), Fe(2+) and Cu(2+). Endolytic, broad-specificity glycosaminoglycan lyase, which degrades the polysaccharides chondroitin, chondroitin-4-sulfate, chondroitin-6-sulfate, dermatan sulfate and to a lesser extent hyaluronan, by beta-elimination of 1,4-hexosaminidic bond to unsaturated tetrasaccharides and disaccharides. Is not active against keratan sulfate, heparan sulfate, and heparin. Is able to promote functional recovery in the injured central nervous system (CNS), via its role in the disruption of the normal organization of the extracellular matrix (ECM). This is Chondroitin sulfate ABC endolyase from Proteus vulgaris.